The sequence spans 162 residues: Transcription elongation factor GreA (162 aa).

Residues 45-75 (ENAEYEAAREKQAFIEGRIKELEDMAARAEI) adopt a coiled-coil conformation.

It belongs to the GreA/GreB family.

Functionally, necessary for efficient RNA polymerase transcription elongation past template-encoded arresting sites. The arresting sites in DNA have the property of trapping a certain fraction of elongating RNA polymerases that pass through, resulting in locked ternary complexes. Cleavage of the nascent transcript by cleavage factors such as GreA or GreB allows the resumption of elongation from the new 3'terminus. GreA releases sequences of 2 to 3 nucleotides. The protein is Transcription elongation factor GreA of Rickettsia canadensis (strain McKiel).